We begin with the raw amino-acid sequence, 386 residues long: Protein RETICULATA-RELATED 4, chloroplastic (386 aa).

Residues 1-61 (MAIASCFFCV…RRVPITPVLS (61 aa)) constitute a chloroplast transit peptide. A disordered region spans residues 61 to 99 (SASSGNGGSDNNGGGLSGGGGGGDGGKNDGDGHGDEDRD). The segment covering 65–85 (GNGGSDNNGGGLSGGGGGGDG) has biased composition (gly residues). Residues 86–99 (GKNDGDGHGDEDRD) are compositionally biased toward basic and acidic residues. Helical transmembrane passes span 201–221 (VVFA…YLPA) and 273–293 (KLFA…NAFI).

Belongs to the RETICULATA family.

The protein localises to the plastid. Its subcellular location is the chloroplast membrane. Its function is as follows. May play a role in leaf development. This chain is Protein RETICULATA-RELATED 4, chloroplastic, found in Arabidopsis thaliana (Mouse-ear cress).